Consider the following 565-residue polypeptide: DNA ligase B (565 aa).

The active-site N6-AMP-lysine intermediate is lysine 130.

It belongs to the NAD-dependent DNA ligase family. LigB subfamily.

It catalyses the reaction NAD(+) + (deoxyribonucleotide)n-3'-hydroxyl + 5'-phospho-(deoxyribonucleotide)m = (deoxyribonucleotide)n+m + AMP + beta-nicotinamide D-nucleotide.. Its function is as follows. Catalyzes the formation of phosphodiester linkages between 5'-phosphoryl and 3'-hydroxyl groups in double-stranded DNA using NAD as a coenzyme and as the energy source for the reaction. The polypeptide is DNA ligase B (Yersinia enterocolitica serotype O:8 / biotype 1B (strain NCTC 13174 / 8081)).